Here is a 450-residue protein sequence, read N- to C-terminus: Chromosomal replication initiator protein DnaA (450 aa).

A domain I, interacts with DnaA modulators region spans residues Met1–Gln84. Residues Gln84–Ser111 form a domain II region. The tract at residues Met112–Ser328 is domain III, AAA+ region. Gly156, Gly158, Lys159, and Thr160 together coordinate ATP. Residues Ser329–Leu450 are domain IV, binds dsDNA.

This sequence belongs to the DnaA family. Oligomerizes as a right-handed, spiral filament on DNA at oriC.

The protein resides in the cytoplasm. In terms of biological role, plays an essential role in the initiation and regulation of chromosomal replication. ATP-DnaA binds to the origin of replication (oriC) to initiate formation of the DNA replication initiation complex once per cell cycle. Binds the DnaA box (a 9 base pair repeat at the origin) and separates the double-stranded (ds)DNA. Forms a right-handed helical filament on oriC DNA; dsDNA binds to the exterior of the filament while single-stranded (ss)DNA is stabiized in the filament's interior. The ATP-DnaA-oriC complex binds and stabilizes one strand of the AT-rich DNA unwinding element (DUE), permitting loading of DNA polymerase. After initiation quickly degrades to an ADP-DnaA complex that is not apt for DNA replication. Binds acidic phospholipids. This is Chromosomal replication initiator protein DnaA from Geobacillus thermodenitrificans (strain NG80-2).